The following is a 116-amino-acid chain: Large ribosomal subunit protein uL18 (116 aa).

This sequence belongs to the universal ribosomal protein uL18 family. As to quaternary structure, part of the 50S ribosomal subunit; part of the 5S rRNA/L5/L18/L25 subcomplex. Contacts the 5S and 23S rRNAs.

In terms of biological role, this is one of the proteins that bind and probably mediate the attachment of the 5S RNA into the large ribosomal subunit, where it forms part of the central protuberance. The sequence is that of Large ribosomal subunit protein uL18 from Alcanivorax borkumensis (strain ATCC 700651 / DSM 11573 / NCIMB 13689 / SK2).